Consider the following 283-residue polypeptide: Polyamine aminopropyltransferase (283 aa).

Positions 5 to 238 (QTWIDEYHKG…GIWSWTFASS (234 aa)) constitute a PABS domain. Gln-32 contacts S-methyl-5'-thioadenosine. Spermidine-binding residues include His-63 and Asp-87. S-methyl-5'-thioadenosine-binding positions include Glu-107 and 139 to 140 (DG). The Proton acceptor role is filled by Asp-158. 158-161 (DCSD) contacts spermidine.

The protein belongs to the spermidine/spermine synthase family. As to quaternary structure, homodimer or homotetramer.

It localises to the cytoplasm. The enzyme catalyses S-adenosyl 3-(methylsulfanyl)propylamine + putrescine = S-methyl-5'-thioadenosine + spermidine + H(+). The protein operates within amine and polyamine biosynthesis; spermidine biosynthesis; spermidine from putrescine: step 1/1. Functionally, catalyzes the irreversible transfer of a propylamine group from the amino donor S-adenosylmethioninamine (decarboxy-AdoMet) to putrescine (1,4-diaminobutane) to yield spermidine. In Prochlorococcus marinus (strain MIT 9301), this protein is Polyamine aminopropyltransferase.